A 612-amino-acid chain; its full sequence is Peroxisomal targeting signal receptor (612 aa).

An N-acetylmethionine modification is found at M1. The tract at residues 1 to 24 (MDVGSCSVGNNPLAQLHKHTQQNK) is disordered. Residue C6 forms a Glycyl cysteine thioester (Cys-Gly) (interchain with G-Cter in ubiquitin) linkage. An amphipathic helix 1 (AH1) region spans residues 7–29 (SVGNNPLAQLHKHTQQNKSLQFN). Glycyl lysine isopeptide (Lys-Gly) (interchain with G-Cter in ubiquitin) cross-links involve residues K18 and K24. A Phosphoserine modification is found at S61. One copy of the TPR 1 repeat lies at 64-97 (NMANMQRFINGEPLIDDKRRMEIGPSSGRLPPFS). The amphipathic helix 2 (AH2) stretch occupies residues 70–104 (RFINGEPLIDDKRRMEIGPSSGRLPPFSNVHSLQT). Positions 120-124 (WSQEF) match the WxxxF/Y motif 1 motif. The interval 129-151 (SIQNRNADTGNSEKAWQRGSTTA) is disordered. Residues 158–174 (PNTMMNNYAYASMNSLS) are amphipathic helix 3 (AH3). Residues 182 to 202 (AFMNQQQSGRSKEGVNEQEQQ) form a disordered region. Positions 204–208 (WTDQF) match the WxxxF/Y motif 2 motif. The amphipathic helix 4 (AH4) stretch occupies residues 257–273 (FQEVWDSIHKDAEEVLP). TPR repeat units follow at residues 313–346 (PNAYKIGCLLMENGAKLSEAALAFEAAVKEKPDH), 347–380 (VDAWLRLGLVQTQNEKELNGISALEECLKLDPKN), 381–418 (LEAMKTLAISYINEGYDMSAFTMLDKWAETKYPEIWSR), 419–456 (IKQQDDKFQKEKGFTHIDMNAHITKQFLQLANNLSTID), 457–490 (PEIQLCLGLLFYTKDDFDKTIDCFESALRVNPND), 491–524 (ELMWNRLGASLANSNRSEEAIQAYHRALQLKPSF), and 525–558 (VRARYNLAVSSMNIGCFKEAAGYLLSVLSMHEVN).

This sequence belongs to the peroxisomal targeting signal receptor family. Interacts (via WxxxF/Y and LVxEF motifs) with PEX14; promoting translocation through the PEX13-PEX14 docking complex. In terms of processing, monoubiquitinated at Cys-6 by PEX2 during PEX5 passage through the retrotranslocation channel: monoubiquitination acts as a signal for PEX5 extraction and is required for proper export from peroxisomes and recycling. Ubiquitination at Cys-6 is UBC4-independent but requires the presence of PEX4. When PEX5 recycling is compromised, polyubiquitinated at Lys-18 and Lys-24 by PEX10 during its passage through the retrotranslocation channel, leading to its degradation. Ubiquitination at Lys-18 and Lys-24 are UBC4-dependent. Monoubiquitination at Cys-6 and polyubiquitination at Lys-18 and Lys-24 are removed by UBP15 in the cytosol, resetting PEX5 for a subsequent import cycle.

It localises to the cytoplasm. It is found in the cytosol. Its subcellular location is the peroxisome matrix. Functionally, receptor that mediates peroxisomal import of proteins containing a C-terminal PTS1-type tripeptide peroxisomal targeting signal (SKL-type). Binds to cargo proteins containing a PTS1 peroxisomal targeting signal in the cytosol, and translocates them into the peroxisome matrix by passing through the PEX13-PEX14 docking complex along with cargo proteins. PEX5 receptor is then retrotranslocated into the cytosol, leading to release of bound cargo in the peroxisome matrix, and reset for a subsequent peroxisome import cycle. The protein is Peroxisomal targeting signal receptor of Saccharomyces cerevisiae (strain ATCC 204508 / S288c) (Baker's yeast).